Consider the following 201-residue polypeptide: NAD(P)H dehydrogenase (quinone) (201 aa).

The region spanning 7 to 192 is the Flavodoxin-like domain; that stretch reads ILVLYYSMYG…SIARYQGEYV (186 aa). Residues 13 to 18 and 81 to 83 each bind FMN; these read SMYGHI and TRF. Tyrosine 15 provides a ligand contact to NAD(+). Position 101 (tryptophan 101) interacts with substrate. FMN-binding positions include 116 to 121 and histidine 136; that span reads STGTGG.

Belongs to the WrbA family. It depends on FMN as a cofactor.

The enzyme catalyses a quinone + NADH + H(+) = a quinol + NAD(+). It carries out the reaction a quinone + NADPH + H(+) = a quinol + NADP(+). This is NAD(P)H dehydrogenase (quinone) from Shigella sonnei (strain Ss046).